We begin with the raw amino-acid sequence, 654 residues long: MKEPLIEISALNRIFQAGEQQVAVLKDIDLKIYPGEMVAIMGTSGSGKSTLMNILGCLDRPSSGSYRISGRETRELDDNELAALRRNHFGFIFQRYHLLSHLDALGNAELAAVYAGVSKSSRRERAHMLLSRLGLEERCEHKPSQLSGGQQQRVSIARALMNGGEVILADEPTGALDTRSGQEVMAVLRELHQQGHTVIIVTHDPLVAAKAERIIEIQDGEIIADRVNPASELETSASSATDAASAAGRKETRGAWLGRFSEAFKMAWVAMTSHRLRTLLTMLGIIIGITAVVSIVAIGEGAKQKVISDINSIGVNTIEIFPGKDWGDERAAAIDTLVAADVEALQAQPFVDSVTPSIVNSQQLRYRNVAVNVNINAVGEQFFRVKGLVVAEGRPLLREDIRTQAQVVVIDSNTRGKLFAAEDDPIGKVILIGASPWTVIGVAEDKSDMFGGGGNLSVWMPYSSATTRLIGRQNFSSIIVRTPDGLSSAVAEQGIIRLLTVRHGVKDFFTFSTDSILKAVEKTTTTLTLLVSSIAVISLIVGGIGVMNIMLVSVTERTREIGIRMAVGARQSDILQQFLIEAVMVCLIGGGIGILLSFGVGALFSLLVQDMQMSFSVTAIVSAVVCSSLIGVLFGFLPARNAARLDPIEALARE.

The 239-residue stretch at 6–244 (IEISALNRIF…TSASSATDAA (239 aa)) folds into the ABC transporter domain. 42–49 (GTSGSGKS) provides a ligand contact to ATP. 4 helical membrane passes run 279 to 299 (LLTM…VAIG), 534 to 554 (IAVI…LVSV), 584 to 604 (MVCL…GALF), and 617 to 637 (VTAI…FGFL).

This sequence belongs to the ABC transporter superfamily. Macrolide exporter (TC 3.A.1.122) family. Homodimer. Part of the tripartite efflux system MacAB-TolC, which is composed of an inner membrane transporter, MacB, a periplasmic membrane fusion protein, MacA, and an outer membrane component, TolC. The complex forms a large protein conduit and can translocate molecules across both the inner and outer membranes. Interacts with MacA.

Its subcellular location is the cell inner membrane. In terms of biological role, part of the tripartite efflux system MacAB-TolC. MacB is a non-canonical ABC transporter that contains transmembrane domains (TMD), which form a pore in the inner membrane, and an ATP-binding domain (NBD), which is responsible for energy generation. Confers resistance against macrolides. This Hahella chejuensis (strain KCTC 2396) protein is Macrolide export ATP-binding/permease protein MacB.